A 296-amino-acid chain; its full sequence is NAD kinase (296 aa).

Catalysis depends on Asp-73, which acts as the Proton acceptor. Residues Asp-73 to Gly-74, Lys-78, Asn-151 to Glu-152, Arg-178, Asp-180, and Thr-191 to Ser-196 contribute to the NAD(+) site.

It belongs to the NAD kinase family. A divalent metal cation serves as cofactor.

It localises to the cytoplasm. It carries out the reaction NAD(+) + ATP = ADP + NADP(+) + H(+). Functionally, involved in the regulation of the intracellular balance of NAD and NADP, and is a key enzyme in the biosynthesis of NADP. Catalyzes specifically the phosphorylation on 2'-hydroxyl of the adenosine moiety of NAD to yield NADP. In Francisella tularensis subsp. holarctica (strain FTNF002-00 / FTA), this protein is NAD kinase.